Consider the following 274-residue polypeptide: Large ribosomal subunit protein uL2 (274 aa).

Residues 200–274 (HALEKSGKAG…SKYIIERRKK (75 aa)) form a disordered region. 2 stretches are compositionally biased toward basic residues: residues 207 to 220 (KAGR…RPRN) and 255 to 274 (LKTR…RRKK).

It belongs to the universal ribosomal protein uL2 family. As to quaternary structure, part of the 50S ribosomal subunit. Forms a bridge to the 30S subunit in the 70S ribosome.

In terms of biological role, one of the primary rRNA binding proteins. Required for association of the 30S and 50S subunits to form the 70S ribosome, for tRNA binding and peptide bond formation. It has been suggested to have peptidyltransferase activity; this is somewhat controversial. Makes several contacts with the 16S rRNA in the 70S ribosome. The protein is Large ribosomal subunit protein uL2 of Parabacteroides distasonis (strain ATCC 8503 / DSM 20701 / CIP 104284 / JCM 5825 / NCTC 11152).